Consider the following 105-residue polypeptide: CRISPR-associated endoribonuclease Cas2 1 (105 aa).

Asp20 contacts Mg(2+).

This sequence belongs to the CRISPR-associated endoribonuclease Cas2 protein family. Homodimer, forms a heterotetramer with a Cas1 homodimer. Mg(2+) serves as cofactor.

Functionally, CRISPR (clustered regularly interspaced short palindromic repeat), is an adaptive immune system that provides protection against mobile genetic elements (viruses, transposable elements and conjugative plasmids). CRISPR clusters contain sequences complementary to antecedent mobile elements and target invading nucleic acids. CRISPR clusters are transcribed and processed into CRISPR RNA (crRNA). Functions as a ssRNA-specific endoribonuclease. Involved in the integration of spacer DNA into the CRISPR cassette. The sequence is that of CRISPR-associated endoribonuclease Cas2 1 (cas21) from Nitrosomonas europaea (strain ATCC 19718 / CIP 103999 / KCTC 2705 / NBRC 14298).